A 147-amino-acid polypeptide reads, in one-letter code: Large ribosomal subunit protein uL22c (147 aa).

This sequence belongs to the universal ribosomal protein uL22 family. As to quaternary structure, part of the 50S ribosomal subunit.

It localises to the plastid. This protein binds specifically to 23S rRNA. Functionally, the globular domain of the protein is located near the polypeptide exit tunnel on the outside of the subunit, while an extended beta-hairpin is found that lines the wall of the exit tunnel in the center of the 70S ribosome. This is Large ribosomal subunit protein uL22c (rpl22) from Cuscuta obtusiflora (Peruvian dodder).